Here is a 192-residue protein sequence, read N- to C-terminus: Phosphoheptose isomerase (192 aa).

Positions 37-192 (ITDSFKNGGK…MMLIEFEMAK (156 aa)) constitute an SIS domain. 52 to 54 (NGG) lines the substrate pocket. Zn(2+)-binding residues include histidine 61 and glutamate 65. Substrate is bound by residues glutamate 65, 93–94 (ND), 119–121 (STS), serine 124, and glutamine 172. Residues glutamine 172 and histidine 180 each contribute to the Zn(2+) site.

Belongs to the SIS family. GmhA subfamily. Homotetramer. Requires Zn(2+) as cofactor.

Its subcellular location is the cytoplasm. It catalyses the reaction 2 D-sedoheptulose 7-phosphate = D-glycero-alpha-D-manno-heptose 7-phosphate + D-glycero-beta-D-manno-heptose 7-phosphate. The protein operates within carbohydrate biosynthesis; D-glycero-D-manno-heptose 7-phosphate biosynthesis; D-glycero-alpha-D-manno-heptose 7-phosphate and D-glycero-beta-D-manno-heptose 7-phosphate from sedoheptulose 7-phosphate: step 1/1. Functionally, catalyzes the isomerization of sedoheptulose 7-phosphate in D-glycero-D-manno-heptose 7-phosphate. The protein is Phosphoheptose isomerase of Glaesserella parasuis serovar 5 (strain SH0165) (Haemophilus parasuis).